Consider the following 270-residue polypeptide: Monofunctional glycosyltransferase (270 aa).

A disordered region spans residues 1–35 (MKRSDRYKTYNKPNDSNDSNQLHHNTYFKPVNKPQ). A compositionally biased stretch (polar residues) spans 11–24 (NKPNDSNDSNQLHH). A helical transmembrane segment spans residues 47 to 67 (LLIPILIIIGIIIGVMYALSL).

Belongs to the glycosyltransferase 51 family.

Its subcellular location is the cell membrane. It catalyses the reaction [GlcNAc-(1-&gt;4)-Mur2Ac(oyl-L-Ala-gamma-D-Glu-L-Lys-D-Ala-D-Ala)](n)-di-trans,octa-cis-undecaprenyl diphosphate + beta-D-GlcNAc-(1-&gt;4)-Mur2Ac(oyl-L-Ala-gamma-D-Glu-L-Lys-D-Ala-D-Ala)-di-trans,octa-cis-undecaprenyl diphosphate = [GlcNAc-(1-&gt;4)-Mur2Ac(oyl-L-Ala-gamma-D-Glu-L-Lys-D-Ala-D-Ala)](n+1)-di-trans,octa-cis-undecaprenyl diphosphate + di-trans,octa-cis-undecaprenyl diphosphate + H(+). Its pathway is cell wall biogenesis; peptidoglycan biosynthesis. Functionally, peptidoglycan polymerase that catalyzes glycan chain elongation using lipid-linked disaccharide-pentapeptide as the substrate. The protein is Monofunctional glycosyltransferase of Staphylococcus saprophyticus subsp. saprophyticus (strain ATCC 15305 / DSM 20229 / NCIMB 8711 / NCTC 7292 / S-41).